The primary structure comprises 425 residues: Glutamate-1-semialdehyde 2,1-aminomutase (425 aa).

At Lys265 the chain carries N6-(pyridoxal phosphate)lysine.

Belongs to the class-III pyridoxal-phosphate-dependent aminotransferase family. HemL subfamily. In terms of assembly, homodimer. The cofactor is pyridoxal 5'-phosphate.

The protein localises to the cytoplasm. The catalysed reaction is (S)-4-amino-5-oxopentanoate = 5-aminolevulinate. The protein operates within porphyrin-containing compound metabolism; protoporphyrin-IX biosynthesis; 5-aminolevulinate from L-glutamyl-tRNA(Glu): step 2/2. This Chromobacterium violaceum (strain ATCC 12472 / DSM 30191 / JCM 1249 / CCUG 213 / NBRC 12614 / NCIMB 9131 / NCTC 9757 / MK) protein is Glutamate-1-semialdehyde 2,1-aminomutase.